The primary structure comprises 213 residues: Orotate phosphoribosyltransferase (213 aa).

Lysine 26 lines the 5-phospho-alpha-D-ribose 1-diphosphate pocket. Position 34-35 (34-35 (FF)) interacts with orotate. Residues 72-73 (YK), arginine 99, lysine 100, lysine 103, histidine 105, and 124-132 (DDVITAGTA) contribute to the 5-phospho-alpha-D-ribose 1-diphosphate site. Orotate contacts are provided by threonine 128 and arginine 156.

It belongs to the purine/pyrimidine phosphoribosyltransferase family. PyrE subfamily. As to quaternary structure, homodimer. It depends on Mg(2+) as a cofactor.

The enzyme catalyses orotidine 5'-phosphate + diphosphate = orotate + 5-phospho-alpha-D-ribose 1-diphosphate. The protein operates within pyrimidine metabolism; UMP biosynthesis via de novo pathway; UMP from orotate: step 1/2. Functionally, catalyzes the transfer of a ribosyl phosphate group from 5-phosphoribose 1-diphosphate to orotate, leading to the formation of orotidine monophosphate (OMP). This is Orotate phosphoribosyltransferase from Pseudomonas paraeruginosa (strain DSM 24068 / PA7) (Pseudomonas aeruginosa (strain PA7)).